The following is a 454-amino-acid chain: MSDNDTIVAQATPPGRGGVGILRISGFKAREVAETVLGKLPKPRYADYLPFKDADGSVLDQGIALWFPGPNSFTGEDVLELQGHGGPVILDLLLKRILTIPGLRIARPGEFSERAFLNDKLDLAQAEAIADLIDASSEQAARSALNSLQGAFSARVNHLVEALTHLRIYVEAAIDFPDEEIDFLSDGKIEAQLNDVIADLDAVRAEARQGSLLREGMKVVIAGRPNAGKSSLLNALAGREAAIVTDIAGTTRDVLREHIHIDGMPLHIIDTAGLREASDEVERIGIERAWQEIEQADRVLFMVDGTTTDAVDPAEIWPEFIARLPAKLPITVVRNKADITGETLGISEVNGHALIRLSARTGEGVDVLRNHLKQSMGFDTNMEGGFLARRRHLQALEQAAEHLQQGKAQLLGAWAGELLAEELRLAQQNLSEITGEFTSDDLLGRIFSSFCIGK.

(6S)-5-formyl-5,6,7,8-tetrahydrofolate is bound by residues arginine 23, glutamate 80, and lysine 120. In terms of domain architecture, TrmE-type G spans 216–377; that stretch reads GMKVVIAGRP…LRNHLKQSMG (162 aa). Asparagine 226 is a binding site for K(+). GTP-binding positions include 226 to 231, 245 to 251, 270 to 273, 335 to 338, and 358 to 360; these read NAGKSS, TDIAGTT, DTAG, NKAD, and SAR. Serine 230 is a Mg(2+) binding site. 3 residues coordinate K(+): threonine 245, isoleucine 247, and threonine 250. Position 251 (threonine 251) interacts with Mg(2+). Lysine 454 provides a ligand contact to (6S)-5-formyl-5,6,7,8-tetrahydrofolate.

This sequence belongs to the TRAFAC class TrmE-Era-EngA-EngB-Septin-like GTPase superfamily. TrmE GTPase family. Homodimer. Heterotetramer of two MnmE and two MnmG subunits. It depends on K(+) as a cofactor.

Its subcellular location is the cytoplasm. Exhibits a very high intrinsic GTPase hydrolysis rate. Involved in the addition of a carboxymethylaminomethyl (cmnm) group at the wobble position (U34) of certain tRNAs, forming tRNA-cmnm(5)s(2)U34. In Shigella dysenteriae serotype 1 (strain Sd197), this protein is tRNA modification GTPase MnmE.